The following is a 331-amino-acid chain: MNAVDYLRISLIDRCNFRCQYCMPDTQDLQFLQPTAVLTATELLTLIRDVFIPLGFARFRLTGGEPLLRPDILDIVRGVIALPQVKDLAMTTNAFLLEPLAQDLFEAGLRRINISLDSLVPETFATIVGRDSQRHKRWNKVWAGIQKAYQVGFNPLKLNVVIIPGVNDHEVLDLAALTIDRQWHVRFIEFMPIGNADLFCDRGWIPSEELRTQIRDRWGLTDGQVQGNGPADVFQIPGAQGTLGFISQMSECFCDRCNRMRLSADGWLRPCLLNETGQLDLKTALRDGVSTDELRDRVRQLLELKPEINYKERQSGTVGANYSRTMSQIGG.

The Radical SAM core domain maps to 1-231 (MNAVDYLRIS…DGQVQGNGPA (231 aa)). Residue R8 coordinates GTP. [4Fe-4S] cluster contacts are provided by C15 and C19. An S-adenosyl-L-methionine-binding site is contributed by Y21. Residue C22 coordinates [4Fe-4S] cluster. R60 provides a ligand contact to GTP. S-adenosyl-L-methionine is bound at residue G64. T91 lines the GTP pocket. S115 is a binding site for S-adenosyl-L-methionine. GTP is bound at residue K157. Residue M191 participates in S-adenosyl-L-methionine binding. 2 residues coordinate [4Fe-4S] cluster: C254 and C257. 259–261 (RMR) is a GTP binding site. A [4Fe-4S] cluster-binding site is contributed by C271.

It belongs to the radical SAM superfamily. MoaA family. Monomer and homodimer. It depends on [4Fe-4S] cluster as a cofactor.

The enzyme catalyses GTP + AH2 + S-adenosyl-L-methionine = (8S)-3',8-cyclo-7,8-dihydroguanosine 5'-triphosphate + 5'-deoxyadenosine + L-methionine + A + H(+). Its pathway is cofactor biosynthesis; molybdopterin biosynthesis. Its function is as follows. Catalyzes the cyclization of GTP to (8S)-3',8-cyclo-7,8-dihydroguanosine 5'-triphosphate. The chain is GTP 3',8-cyclase from Acaryochloris marina (strain MBIC 11017).